The following is a 921-amino-acid chain: Isoleucine--tRNA ligase (921 aa).

The 'HIGH' region signature appears at 59–69 (PYANGHLHIGH). Glu-569 contacts L-isoleucyl-5'-AMP. A 'KMSKS' region motif is present at residues 610–614 (KMSKS). Lys-613 serves as a coordination point for ATP. Residues Cys-894, Cys-897, Cys-909, and Cys-912 each coordinate Zn(2+).

This sequence belongs to the class-I aminoacyl-tRNA synthetase family. IleS type 1 subfamily. Monomer. Zn(2+) serves as cofactor.

Its subcellular location is the cytoplasm. It catalyses the reaction tRNA(Ile) + L-isoleucine + ATP = L-isoleucyl-tRNA(Ile) + AMP + diphosphate. Functionally, catalyzes the attachment of isoleucine to tRNA(Ile). As IleRS can inadvertently accommodate and process structurally similar amino acids such as valine, to avoid such errors it has two additional distinct tRNA(Ile)-dependent editing activities. One activity is designated as 'pretransfer' editing and involves the hydrolysis of activated Val-AMP. The other activity is designated 'posttransfer' editing and involves deacylation of mischarged Val-tRNA(Ile). The chain is Isoleucine--tRNA ligase from Campylobacter lari (strain RM2100 / D67 / ATCC BAA-1060).